The sequence spans 445 residues: Phosphoglucosamine mutase (445 aa).

S99 functions as the Phosphoserine intermediate in the catalytic mechanism. S99, D242, D244, and D246 together coordinate Mg(2+). S99 is subject to Phosphoserine.

This sequence belongs to the phosphohexose mutase family. Mg(2+) is required as a cofactor. Activated by phosphorylation.

It catalyses the reaction alpha-D-glucosamine 1-phosphate = D-glucosamine 6-phosphate. In terms of biological role, catalyzes the conversion of glucosamine-6-phosphate to glucosamine-1-phosphate. The chain is Phosphoglucosamine mutase from Campylobacter jejuni (strain RM1221).